Reading from the N-terminus, the 187-residue chain is Hypoxanthine/guanine phosphoribosyltransferase (187 aa).

Belongs to the purine/pyrimidine phosphoribosyltransferase family. Archaeal HPRT subfamily. In terms of assembly, homodimer.

It localises to the cytoplasm. It carries out the reaction IMP + diphosphate = hypoxanthine + 5-phospho-alpha-D-ribose 1-diphosphate. It catalyses the reaction GMP + diphosphate = guanine + 5-phospho-alpha-D-ribose 1-diphosphate. It functions in the pathway purine metabolism; IMP biosynthesis via salvage pathway; IMP from hypoxanthine: step 1/1. Its function is as follows. Catalyzes a salvage reaction resulting in the formation of IMP that is energically less costly than de novo synthesis. The sequence is that of Hypoxanthine/guanine phosphoribosyltransferase from Ferroglobus placidus (strain DSM 10642 / AEDII12DO).